Here is a 443-residue protein sequence, read N- to C-terminus: F-box only protein 39 (443 aa).

The 47-residue stretch at 13–59 (QSCWATLPDVCLRRVFWWLGDRDRSRAALVCRKWNQIMYSADLWRYR) folds into the F-box domain.

As to quaternary structure, directly interacts with SKP1 and CUL1.

Its function is as follows. Substrate-recognition component of the SCF (SKP1-CUL1-F-box protein)-type E3 ubiquitin ligase complex. The polypeptide is F-box only protein 39 (Fbxo39) (Mus musculus (Mouse)).